Consider the following 165-residue polypeptide: UPF0254 protein MMP0935 (165 aa).

The protein belongs to the UPF0254 family.

The sequence is that of UPF0254 protein MMP0935 from Methanococcus maripaludis (strain DSM 14266 / JCM 13030 / NBRC 101832 / S2 / LL).